The primary structure comprises 465 residues: WASH complex subunit 1 (465 aa).

Positions 1-54 (MTPVRMQHSLAGQTYAVPFIQPDLRREEAVQQMADALQYLQKVSGDIFSRISQQ) are required for WASH complex assembly. Positions 1–167 (MTPVRMQHSL…EGLGGLPSNI (167 aa)) are WHD1. Residue lysine 220 forms a Glycyl lysine isopeptide (Lys-Gly) (interchain with G-Cter in ubiquitin) linkage. Disordered stretches follow at residues 297–359 (QDGV…VDPS), 376–407 (GKAK…QGGH), and 423–465 (ISGK…DWES). Residues 302–314 (TPPPPPPPPPPAP) are compositionally biased toward pro residues. Residues 349 to 465 (QGAPREVVDP…AEEDEDDWES (117 aa)) form a VCA region. Residues 361–383 (GWATLLESIRQAGGIGKAKLRSM) form the WH2 domain. A compositionally biased stretch (basic and acidic residues) spans 382 to 398 (SMKERKLEKQQQKEQEQ). A compositionally biased stretch (gly residues) spans 424–436 (SGKGPGAGEGPGG). The span at 456 to 465 (AEEDEDDWES) shows a compositional bias: acidic residues.

This sequence belongs to the WASH1 family. In terms of assembly, component of the WASH core complex also described as WASH regulatory complex (SHRC) composed of WASH (WASHC1, WASH2P or WASH3P), WASHC2 (WASHC2A or WASHC2C), WASHC3, WASHC4 and WASHC5. The WASH core complex associates via WASHC2 with the F-actin-capping protein dimer (formed by CAPZA1, CAPZA2 or CAPZA3 and CAPZB) in a transient or substoichiometric manner which was initially described as WASH complex. Interacts (via WHD1 region) with WASHC2C; the interaction is direct. Interacts with VPS35; mediates the association with the retromer CSC complex. Interacts with FKBP15. Interacts with alpha-tubulin. Interacts with BECN1; this interaction can be competed out by AMBRA1 binding. Interacts with BLOC1S2; may associate with the BLOC-1 complex. Interacts with tubulin gamma chain (TUBG1 or TUBG2). Interacts with EXOC1, EXOC4, EXOC8; in MMP14-positive endosomes in breast tumor cells; indicative for an association with the exocyst complex. Interacts with TBC1D23. Ubiquitinated at Lys-220 via 'Lys-63'-linked ubiquitin chains by the TRIM27:MAGEL2 E3 ubiquitin ligase complex, leading to promote endosomal F-actin assembly.

The protein resides in the early endosome membrane. The protein localises to the recycling endosome membrane. It is found in the late endosome. Its subcellular location is the cytoplasmic vesicle. It localises to the autophagosome. The protein resides in the cytoplasm. The protein localises to the cytoskeleton. It is found in the microtubule organizing center. Its subcellular location is the centrosome. It localises to the centriole. Its function is as follows. Acts as a component of the WASH core complex that functions as a nucleation-promoting factor (NPF) at the surface of endosomes, where it recruits and activates the Arp2/3 complex to induce actin polymerization, playing a key role in the fission of tubules that serve as transport intermediates during endosome sorting. Involved in endocytic trafficking of EGF. Involved in transferrin receptor recycling. Regulates the trafficking of endosomal alpha5beta1 integrin to the plasma membrane and involved in invasive cell migration. In T-cells involved in endosome-to-membrane recycling of receptors including T-cell receptor (TCR), CD28 and ITGAL; proposed to be implicated in T cell proliferation and effector function. In dendritic cells involved in endosome-to-membrane recycling of major histocompatibility complex (MHC) class II probably involving retromer and subsequently allowing antigen sampling, loading and presentation during T-cell activation. Involved in Arp2/3 complex-dependent actin assembly driving Salmonella typhimurium invasion independent of ruffling. Involved in the exocytosis of MMP14 leading to matrix remodeling during invasive migration and implicating late endosome-to-plasma membrane tubular connections and cooperation with the exocyst complex. Involved in negative regulation of autophagy independently from its role in endosomal sorting by inhibiting BECN1 ubiquitination to inactivate PIK3C3/Vps34 activity. The polypeptide is WASH complex subunit 1 (Homo sapiens (Human)).